The sequence spans 150 residues: SsrA-binding protein (150 aa).

This sequence belongs to the SmpB family.

The protein localises to the cytoplasm. Required for rescue of stalled ribosomes mediated by trans-translation. Binds to transfer-messenger RNA (tmRNA), required for stable association of tmRNA with ribosomes. tmRNA and SmpB together mimic tRNA shape, replacing the anticodon stem-loop with SmpB. tmRNA is encoded by the ssrA gene; the 2 termini fold to resemble tRNA(Ala) and it encodes a 'tag peptide', a short internal open reading frame. During trans-translation Ala-aminoacylated tmRNA acts like a tRNA, entering the A-site of stalled ribosomes, displacing the stalled mRNA. The ribosome then switches to translate the ORF on the tmRNA; the nascent peptide is terminated with the 'tag peptide' encoded by the tmRNA and targeted for degradation. The ribosome is freed to recommence translation, which seems to be the essential function of trans-translation. This chain is SsrA-binding protein, found in Polynucleobacter asymbioticus (strain DSM 18221 / CIP 109841 / QLW-P1DMWA-1) (Polynucleobacter necessarius subsp. asymbioticus).